We begin with the raw amino-acid sequence, 331 residues long: MSADTDTDTDTGTGTGPDTDTGTAAVVERLRGGMARGVLSFPLTSFHDDGSLDLDGFRAHLETQLAAGPGAVFPACGTGEFFSLDEDEYRQVVTAAVELTAGRVPVVAGTGYGWAQAARFARIAEDAGADALLVLPHYLVAAPQDGLVGQLERLAERTRLPLIAYQRGQVTYSVESLRRIARIPGVVGLKDGHSDLDRLQRLTLAAPEGFLFFNGAATAEIQARAYAAVGVPAYSSAVHAFAPEIAGAFHAALRDGHGKAVEKLLREFYVPFVELRDRVPGYGVSLVKAAARLRGRPVGPVRAPLTDPSAADLADLTSLLSTGLDLVGAAL.

Positions 1 to 23 (MSADTDTDTDTGTGTGPDTDTGT) are disordered. Residues 10–23 (DTGTGTGPDTDTGT) are compositionally biased toward low complexity.

The protein belongs to the DapA family.

The catalysed reaction is 5-dehydro-4-deoxy-D-glucarate + H(+) = 2,5-dioxopentanoate + CO2 + H2O. It functions in the pathway carbohydrate acid metabolism; D-glucarate degradation; 2,5-dioxopentanoate from D-glucarate: step 2/2. In Streptomyces avermitilis (strain ATCC 31267 / DSM 46492 / JCM 5070 / NBRC 14893 / NCIMB 12804 / NRRL 8165 / MA-4680), this protein is Probable 5-dehydro-4-deoxyglucarate dehydratase 2.